Reading from the N-terminus, the 1630-residue chain is Transient receptor potential cation channel subfamily M member 1 (1630 aa).

Disordered stretches follow at residues 1 to 25 (MGSMRKMSSSFKRGSIKSSTSGSQK), 65 to 92 (PLPSVTPSSTAEDTKQGDAQSGKWSVSK), 453 to 492 (APPVDTKVAEKEKKPPTATTKGRGKGKGKKKGKVKEEVEE), 620 to 643 (LGMEDDEPPAKGKKKKKKKKEEEI), and 824 to 858 (SKENEDGKEKEEENVDANADAGSRKGDEENEHKKQ). The Cytoplasmic segment spans residues 1–877 (MGSMRKMSSS…CEFYNAPIVK (877 aa)). A compositionally biased stretch (low complexity) spans 8–25 (SSSFKRGSIKSSTSGSQK). The span at 69-92 (VTPSSTAEDTKQGDAQSGKWSVSK) shows a compositional bias: polar residues. A compositionally biased stretch (basic residues) spans 474 to 485 (GRGKGKGKKKGK). Basic and acidic residues-rich tracts occupy residues 825-834 (KENEDGKEKE) and 845-855 (GSRKGDEENEH). The helical transmembrane segment at 878 to 898 (FWFYTISYLGYLLLFNYVILV) threads the bilayer. Over 899-944 (RMDGWPSPQEWIVISYIVSLALEKIREILMSEPGKLSQKIKVWLQE) the chain is Extracellular. A helical membrane pass occupies residues 945 to 965 (YWNITDLVAISMFMVGAILRL). The Cytoplasmic segment spans residues 966-975 (QNQPYMGYGR). The helical transmembrane segment at 976–996 (VIYCVDIILWYIRVLDIFGVN) threads the bilayer. Residues 997-1008 (KYLGPYVMMIGK) are Extracellular-facing. The chain crosses the membrane as a helical span at residues 1009-1029 (MMIDMLYFVVIMLVVLMSFGV). Residues 1030–1107 (ARQAILHPEE…CIPGAWLTPA (78 aa)) lie on the Cytoplasmic side of the membrane. The helical transmembrane segment at 1108–1128 (LMACYLLVANILLVNLLIAVF) threads the bilayer. An N-linked (GlcNAc...) asparagine glycan is attached at asparagine 1129. Over 1129–1158 (NNTFFEVKSISNQVWKFQRYQLIMTFHDRP) the chain is Extracellular. Residues 1159 to 1179 (VLPPPMIILSHIYIIVMRLSG) traverse the membrane as a helical segment. Topologically, residues 1180-1630 (RCRKKREGDQ…QEKGNPETEC (451 aa)) are cytoplasmic. Positions 1235–1255 (IRVTSERVENMSMRLEEINER) form a coiled coil. 2 disordered regions span residues 1362-1414 (EDVK…AGEL) and 1575-1630 (CLRS…ETEC).

This sequence belongs to the transient receptor (TC 1.A.4) family. LTrpC subfamily. TRPM1 sub-subfamily. Interacts with TRPM3; the interaction results in the formation of a heteromultimeric cation channel complex that are functionally different from the homomeric channels. Interacts with GPR179. Associates with both guanine nucleotide-binding proteins G(o) and beta-gamma G protein dimer; implicated in directly regulating TRPM1 channel open-state.

It is found in the cell membrane. Its subcellular location is the endoplasmic reticulum membrane. The protein resides in the cell projection. It localises to the axon. It catalyses the reaction Ca(2+)(in) = Ca(2+)(out). It carries out the reaction Mg(2+)(in) = Mg(2+)(out). The catalysed reaction is Mn(2+)(in) = Mn(2+)(out). The enzyme catalyses Ni(2+)(in) = Ni(2+)(out). With respect to regulation, inhibited by extracellular zinc ions. Inhibited by intracellular Mg(2+). Activated by the neuroactive steroid pregnenolone sulfate. Negatively regulated by activation of GRM6 receptors in the ON-bipolar cells. Constitutively open nonselective divalent cation-conducting channels which mediate the influx of Ca(2+), Mg(2+), Mn(2+), Ba(2+), and Ni(2+) into the cytoplasm, leading to membrane depolarization. Impermeable to zinc ions. In addition, forms heteromultimeric ion channels with TRPM3 which are permeable for calcium and zinc ions. Plays an essential role for the depolarizing photoresponse of retinal ON bipolar cells. In the dark, tonic release of glutamate activates the G-protein coupled receptor for glutamate GRM6, its activation induces the release of G(o) protein and the beta-gamma G protein dimer. Both subunits can interact and inactivate the TRPM1 channel. A light onset, induces decrease in glutamate release and deactivation of GRM6 leading to channel opening and membrane depolarization. May play a role in metastasis suppression. This Rattus norvegicus (Rat) protein is Transient receptor potential cation channel subfamily M member 1.